Consider the following 1092-residue polypeptide: Electroneutral sodium bicarbonate exchanger 1 (1092 aa).

3 disordered regions span residues 1–26, 55–95, and 243–263; these read MPAGSNEPDGVLSYQRPDEEAVVDQG, LGRQ…HDTP, and KKQSDPHSMDRDGQTVSPQSA. Residues 1-478 are Extracellular-facing; the sequence is MPAGSNEPDG…DYRDALSLQC (478 aa). Residues 58–76 are compositionally biased toward basic residues; it reads QSHRHHRTHGQKHRRRGGR. Basic and acidic residues predominate over residues 243 to 255; that stretch reads KKQSDPHSMDRDG. The helical transmembrane segment at 479 to 499 threads the bilayer; sequence LASFLFLYCACMSPVITFGGL. At 500 to 507 the chain is on the cytoplasmic side; it reads LGEATEGR. A helical membrane pass occupies residues 508 to 528; the sequence is ISAIESLFGASMTGIAYSLFA. At 529–565 the chain is on the extracellular side; it reads GQPLTILGSTGPVLVFEKILFKFCKDYALSYLSLRAC. Residues 566–586 traverse the membrane as a helical segment; that stretch reads IGLWTAFLCIVLVATDASSLV. At 587–595 the chain is on the cytoplasmic side; it reads CYITRFTEE. The helical transmembrane segment at 596–616 threads the bilayer; that stretch reads AFASLICIIFIYEAIEKLIHL. Residues 617–687 lie on the Extracellular side of the membrane; it reads AETYPIHMHS…EFIGSACGHH (71 aa). 2 disulfide bridges follow: C636-C684 and C638-C672. 2 N-linked (GlcNAc) asparagine glycosylation sites follow: N646 and N666. A helical transmembrane segment spans residues 688–708; that stretch reads GPYTPDVLFWSCILFFATFIV. At 709–731 the chain is on the cytoplasmic side; sequence SSTLKTFKTSRYFPTRVRSTVSD. A helical membrane pass occupies residues 732–752; the sequence is FAVFLTIFTMVILDFLIGVPS. At 753–778 the chain is on the extracellular side; sequence PKLQVPSVFKPTRDDRGWFISPIGPN. Residues 779–799 traverse the membrane as a helical segment; the sequence is PWWTVIAAIIPALLCTILIFM. The Cytoplasmic segment spans residues 800-824; it reads DQQITAVIINRKEHKLKKGCGYHLD. The chain crosses the membrane as a helical span at residues 825-845; that stretch reads LLVVAIMLGVCSLMGLPWFVA. Residues 846-881 are Extracellular-facing; it reads ATVLSITHVNSLKLESECSAPGEQPKFLGIREQRVT. The chain crosses the membrane as a helical span at residues 882-902; sequence GLMIFVLMGCSVFMTAVLKFI. The Cytoplasmic segment spans residues 903-904; sequence PM. The chain crosses the membrane as a helical span at residues 905–925; it reads PVLYGVFLYMGVSSLQGIQFF. The Extracellular portion of the chain corresponds to 926 to 962; that stretch reads DRLKLFGMPAKHQPDFIYLRHVPLRKVHLFTLVQLTC. The chain crosses the membrane as a helical span at residues 963-983; it reads LVLLWVIKASPAAIVFPMMVL. Residues 984–1092 are Cytoplasmic-facing; it reads ALVFVRKVMD…GNTKEKSPFN (109 aa).

This sequence belongs to the anion exchanger (TC 2.A.31) family. As to quaternary structure, homodimer. In terms of tissue distribution, expressed in the Purkinje cells and dendrites in the molecular layer of the cerebellum (at protein level). Expressed in the hippocampal neurons (at protein level). Strong expression observed in testis and moderate expression in kidney inner medulla, the submandibular gland, eye, cerebrum and cerebellum.

The protein resides in the cell membrane. It is found in the apical cell membrane. The protein localises to the basolateral cell membrane. Its subcellular location is the cytoplasmic vesicle. It localises to the secretory vesicle. The protein resides in the synaptic vesicle membrane. It carries out the reaction 2 hydrogencarbonate(out) + chloride(in) + Na(+)(out) = 2 hydrogencarbonate(in) + chloride(out) + Na(+)(in). Functionally, mediates electroneutral sodium- and carbonate-dependent chloride-HCO3(-) exchange with a Na(+):HCO3(-) stoichiometry of 2:1. Plays a major role in pH regulation in neurons. Mediates sodium reabsorption in the renal cortical collecting ducts. In Rattus norvegicus (Rat), this protein is Electroneutral sodium bicarbonate exchanger 1.